Here is a 156-residue protein sequence, read N- to C-terminus: Transcriptional repressor NrdR (156 aa).

A zinc finger spans residues 3–34 (CPYCGHLEDRVVDSRETQDGQATRRRRACLSC). Residues 49–139 (PQVVKKDGRR…VYRAFRDVGE (91 aa)) form the ATP-cone domain.

It belongs to the NrdR family. Zn(2+) serves as cofactor.

Functionally, negatively regulates transcription of bacterial ribonucleotide reductase nrd genes and operons by binding to NrdR-boxes. The chain is Transcriptional repressor NrdR from Anaeromyxobacter dehalogenans (strain 2CP-C).